Here is a 500-residue protein sequence, read N- to C-terminus: Prostacyclin synthase (500 aa).

Residues 1–20 (MAWAALLGLLAALLLLLLLS) form a helical membrane-spanning segment. Residues R106, L112, N287, 358–359 (TR), and R382 contribute to the substrate site. C441 provides a ligand contact to heme.

This sequence belongs to the cytochrome P450 family. It depends on heme as a cofactor. As to expression, widely expressed; particularly abundant in ovary, heart, skeletal muscle, lung and prostate.

The protein localises to the endoplasmic reticulum membrane. The catalysed reaction is prostaglandin H2 = prostaglandin I2. The enzyme catalyses a hydroperoxyeicosatetraenoate = an oxoeicosatetraenoate + H2O. It catalyses the reaction (15S)-hydroperoxy-(5Z,8Z,11Z,13E)-eicosatetraenoate = 15-oxo-(5Z,8Z,11Z,13E)-eicosatetraenoate + H2O. It carries out the reaction (15S)-hydroperoxy-(5Z,8Z,11Z,13E)-eicosatetraenoate + AH2 = (15S)-hydroxy-(5Z,8Z,11Z,13E)-eicosatetraenoate + A + H2O. Its function is as follows. Catalyzes the biosynthesis and metabolism of eicosanoids. Catalyzes the isomerization of prostaglandin H2 to prostacyclin (= prostaglandin I2), a potent mediator of vasodilation and inhibitor of platelet aggregation. Additionally, displays dehydratase activity, toward hydroperoxyeicosatetraenoates (HPETEs), especially toward (15S)-hydroperoxy-(5Z,8Z,11Z,13E)-eicosatetraenoate (15(S)-HPETE). The sequence is that of Prostacyclin synthase (PTGIS) from Homo sapiens (Human).